The following is a 397-amino-acid chain: Dual oxidase maturation factor 1 (397 aa).

Transmembrane regions (helical) follow at residues 26-46 (FVIF…LPGV) and 57-77 (YVLM…PCWA). N-linked (GlcNAc...) asparagine glycosylation occurs at N109. Helical transmembrane passes span 191 to 211 (AAIW…LFLP), 218 to 238 (ILAT…LSPC), and 261 to 281 (CFYL…GLGI). The tract at residues 324–376 (YGTNTTNSSRDKNDISSDKTAGSSGFQSRTSTCQSSASSASLRSQSSIETVHD) is disordered. N327 and N330 each carry an N-linked (GlcNAc...) asparagine glycan. A compositionally biased stretch (polar residues) spans 341 to 350 (DKTAGSSGFQ). A compositionally biased stretch (low complexity) spans 351-370 (SRTSTCQSSASSASLRSQSS).

Belongs to the DUOXA family. In terms of assembly, interacts with bli-3 and tsp-15. Interacts with csnk-1. In terms of tissue distribution, expressed in the hypodermis, specifically in seam cells, the terminal bulb of the pharynx, the distal region of the gonadal arm, vulva, spermatheca and uterus.

Its subcellular location is the membrane. In terms of biological role, plays a role in cuticle biogenesis. In complex with tsp-15 and the dual oxidase bli-3, promotes the generation of reactive oxygen species (ROS) and tyrosine cross-linking of collagen, thus stabilizing cuticular extracellular matrix. The chain is Dual oxidase maturation factor 1 from Caenorhabditis elegans.